Here is a 203-residue protein sequence, read N- to C-terminus: Pyridoxine/pyridoxamine 5'-phosphate oxidase (203 aa).

FMN-binding positions include 51–56 (RMVLLK), 66–67 (YT), Arg72, Lys73, and Gln95. Lys56 is a substrate binding site. Residues Tyr113, Arg117, and Ser121 each contribute to the substrate site. FMN is bound by residues 130–131 (QS) and Trp175. 181 to 183 (RLH) contributes to the substrate binding site. Arg185 is an FMN binding site.

Belongs to the pyridoxamine 5'-phosphate oxidase family. In terms of assembly, homodimer. The cofactor is FMN.

It carries out the reaction pyridoxamine 5'-phosphate + O2 + H2O = pyridoxal 5'-phosphate + H2O2 + NH4(+). The enzyme catalyses pyridoxine 5'-phosphate + O2 = pyridoxal 5'-phosphate + H2O2. The protein operates within cofactor metabolism; pyridoxal 5'-phosphate salvage; pyridoxal 5'-phosphate from pyridoxamine 5'-phosphate: step 1/1. Its pathway is cofactor metabolism; pyridoxal 5'-phosphate salvage; pyridoxal 5'-phosphate from pyridoxine 5'-phosphate: step 1/1. Its function is as follows. Catalyzes the oxidation of either pyridoxine 5'-phosphate (PNP) or pyridoxamine 5'-phosphate (PMP) into pyridoxal 5'-phosphate (PLP). This chain is Pyridoxine/pyridoxamine 5'-phosphate oxidase, found in Novosphingobium aromaticivorans (strain ATCC 700278 / DSM 12444 / CCUG 56034 / CIP 105152 / NBRC 16084 / F199).